The primary structure comprises 419 residues: UDP-N-acetylglucosamine 1-carboxyvinyltransferase (419 aa).

Residue 22-23 (KN) coordinates phosphoenolpyruvate. Arginine 93 provides a ligand contact to UDP-N-acetyl-alpha-D-glucosamine. Cysteine 117 functions as the Proton donor in the catalytic mechanism. The residue at position 117 (cysteine 117) is a 2-(S-cysteinyl)pyruvic acid O-phosphothioketal. Aspartate 307 and isoleucine 329 together coordinate UDP-N-acetyl-alpha-D-glucosamine.

Belongs to the EPSP synthase family. MurA subfamily.

It localises to the cytoplasm. It carries out the reaction phosphoenolpyruvate + UDP-N-acetyl-alpha-D-glucosamine = UDP-N-acetyl-3-O-(1-carboxyvinyl)-alpha-D-glucosamine + phosphate. It participates in cell wall biogenesis; peptidoglycan biosynthesis. In terms of biological role, cell wall formation. Adds enolpyruvyl to UDP-N-acetylglucosamine. The sequence is that of UDP-N-acetylglucosamine 1-carboxyvinyltransferase from Shewanella sediminis (strain HAW-EB3).